The chain runs to 130 residues: Small ribosomal subunit protein uS11 (130 aa).

The protein belongs to the universal ribosomal protein uS11 family. As to quaternary structure, part of the 30S ribosomal subunit. Interacts with proteins S7 and S18. Binds to IF-3.

In terms of biological role, located on the platform of the 30S subunit, it bridges several disparate RNA helices of the 16S rRNA. Forms part of the Shine-Dalgarno cleft in the 70S ribosome. This is Small ribosomal subunit protein uS11 from Prochlorococcus marinus (strain MIT 9312).